The following is a 325-amino-acid chain: Homocysteine S-methyltransferase 2 (325 aa).

In terms of domain architecture, Hcy-binding spans 6–321 (LKQFLADNPK…KDIQEISAAV (316 aa)). Thr-138 carries the post-translational modification Phosphothreonine. Zn(2+)-binding residues include Cys-239, Cys-306, and Cys-307.

Requires Zn(2+) as cofactor.

The protein localises to the cytoplasm. It is found in the nucleus. The catalysed reaction is S-methyl-L-methionine + L-homocysteine = 2 L-methionine + H(+). Functionally, homocysteine S-methyltransferase involved in the conversion of S-adenosylmethionine (AdoMet) to methionine to control the methionine/AdoMet ratio. Also converts S-methylmethionine (SMM) to methionine. In Saccharomyces cerevisiae (strain ATCC 204508 / S288c) (Baker's yeast), this protein is Homocysteine S-methyltransferase 2 (SAM4).